The sequence spans 231 residues: Ribonuclease P protein component 3 (231 aa).

This sequence belongs to the eukaryotic/archaeal RNase P protein component 3 family. In terms of assembly, consists of a catalytic RNA component and at least 4-5 protein subunits.

The protein localises to the cytoplasm. The enzyme catalyses Endonucleolytic cleavage of RNA, removing 5'-extranucleotides from tRNA precursor.. Part of ribonuclease P, a protein complex that generates mature tRNA molecules by cleaving their 5'-ends. This Methanococcus vannielii (strain ATCC 35089 / DSM 1224 / JCM 13029 / OCM 148 / SB) protein is Ribonuclease P protein component 3.